The primary structure comprises 572 residues: Probable D-xylulose kinase A (572 aa).

Substrate-binding residues include His-95, Arg-166, Asp-282, and Asn-283. ATP-binding positions include Trp-365, 470 to 471 (GG), and Asn-474.

It belongs to the FGGY kinase family.

It localises to the cytoplasm. The catalysed reaction is D-xylulose + ATP = D-xylulose 5-phosphate + ADP + H(+). Functionally, highly specific D-xylulose kinase which participates in the catabolism of xylose. Xylose is a major component of hemicelluloses such as xylan. Most fungi utilize D-xylose via three enzymatic reactions, xylose reductase (XR), xylitol dehydrogenase (XDH), and xylulokinase, to form xylulose 5-phosphate, which enters pentose phosphate pathway. In Aspergillus oryzae (strain ATCC 42149 / RIB 40) (Yellow koji mold), this protein is Probable D-xylulose kinase A (xkiA).